Here is a 1007-residue protein sequence, read N- to C-terminus: A disintegrin and metalloproteinase with thrombospondin motifs 1 (1007 aa).

The N-terminal stretch at 1 to 20 is a signal peptide; the sequence is MPCCLWAALSLLLAVVGAGA. Residues asparagine 130 and asparagine 228 are each glycosylated (N-linked (GlcNAc...) asparagine). A Peptidase M12B domain is found at 184-370; that stretch reads LWLELAIVAD…WSSCSKEQFH (187 aa). Histidine 322 lines the Zn(2+) pocket. The Metal-binding motif lies at 322-333; the sequence is HELAHLLGLTHD. The active site involves glutamate 323. Positions 326 and 332 each coordinate Zn(2+). 4 cysteine pairs are disulfide-bonded: cysteine 338-cysteine 364, cysteine 494-cysteine 530, cysteine 498-cysteine 536, and cysteine 509-cysteine 520. The 56-residue stretch at 482–537 folds into the TSP type-1 1 domain; it reads TPEWGDWEEWSACNADCGYGLRTRTRKCKYRGFVSESACEGAGSQVATCWAGSSCA. N-linked (GlcNAc...) asparagine glycosylation is found at asparagine 561, asparagine 610, asparagine 626, asparagine 737, asparagine 777, and asparagine 865. TSP type-1 domains are found at residues 833–899 and 900–952; these read CEFV…NRIP and CPVY…RRCP. 3 cysteine pairs are disulfide-bonded: cysteine 912-cysteine 946, cysteine 916-cysteine 951, and cysteine 927-cysteine 935.

Requires Zn(2+) as cofactor.

The protein localises to the secreted. It is found in the extracellular space. Its subcellular location is the extracellular matrix. Functionally, involved in larval molting and metamorphosis. May degrade extracellular matrix (ECM) and basement membrane (BM) during the development of organs to allow degeneration and remodeling of tissues. This is A disintegrin and metalloproteinase with thrombospondin motifs 1 from Bombyx mori (Silk moth).